The chain runs to 1275 residues: Inner capsid protein lambda-1 (1275 aa).

Residues 1–12 (MKRIPRKTKGKS) are compositionally biased toward basic residues. Residues 1–149 (MKRIPRKTKG…DNEGGSNQKP (149 aa)) form a disordered region. Basic and acidic residues-rich tracts occupy residues 18-35 (DSTERADDGSSQLRDKQN) and 75-117 (NNDE…DKSK). Polar residues predominate over residues 118–149 (AQVTYSDTGINNANELSRSGNVDNEGGSNQKP). A C2H2-type zinc finger spans residues 181–203 (YQCHVCSAVLFSPLDLDAHVASH).

Belongs to the orthoreovirus lambda-1 protein family. In terms of assembly, homodecamer; each decamer is made up of two conformers of VP2, called VP2A and VP2B. 12 homodecamers assemble to form an icosahedral capsid. Interacts with protein mu-NS; in viral inclusions. Mg(2+) serves as cofactor. The cofactor is Mn(2+).

It localises to the virion. The enzyme catalyses ATP + H2O = ADP + phosphate + H(+). Inner capsid protein that self-assembles to form an icosahedral capsid with a T=2 symmetry, which consists of 120 copies of VP2, with channels at each of its five-fold vertices. This capsid constitutes the innermost concentric layer of the viral mature particle. Functionally, displays NTPase, RNA 5'-triphosphatase (RTPase) and RNA helicase activities. Helicase activity might be involved in unwinding or reannealing dsRNA during RNA synthesis. RTPase enzymatic activity represents the first step in RNA capping, which yields a 5'-diphosphorylated plus-strand RNA. The polypeptide is Inner capsid protein lambda-1 (L3) (Reovirus type 3 (strain Dearing) (T3D)).